The chain runs to 455 residues: Tumor necrosis factor receptor superfamily member 1A (455 aa).

The N-terminal stretch at 1 to 29 (MGLSTVPDLLLPLVLLELLVGIYPSGVIG) is a signal peptide. Topologically, residues 30–211 (LVPHLGDREK…VKGTEDSGTT (182 aa)) are extracellular. TNFR-Cys repeat units follow at residues 43-82 (VCPQGKYIHPQNNSICCTKCHKGTYLYNDCPGPGQDTDCR), 83-125 (ECES…DTVC), 126-166 (GCRK…NTVC), and 167-196 (TCHAGFFLRENECVSCSNCKKSLECTKLCL). 7 cysteine pairs are disulfide-bonded: cysteine 44–cysteine 58, cysteine 59–cysteine 72, cysteine 62–cysteine 81, cysteine 84–cysteine 99, cysteine 102–cysteine 117, cysteine 105–cysteine 125, and cysteine 127–cysteine 143. A glycan (N-linked (GlcNAc...) asparagine) is linked at asparagine 54. N-linked (GlcNAc...) asparagine glycans are attached at residues asparagine 145 and asparagine 151. 5 disulfides stabilise this stretch: cysteine 146-cysteine 158, cysteine 149-cysteine 166, cysteine 168-cysteine 179, cysteine 182-cysteine 195, and cysteine 185-cysteine 191. A helical transmembrane segment spans residues 212–232 (VLLPLVIFFGLCLLSLLFIGL). Topologically, residues 233 to 455 (MYRYQRWKSK…ALPPAPSLLR (223 aa)) are cytoplasmic. Residues 254 to 273 (EKEGELEGTTTKPLAPNPSF) are disordered. Residues 338–348 (LQKWEDSAHKP) are N-SMase activation domain (NSD). The Death domain occupies 356–441 (PATLYAVVEN…GCLEDIEEAL (86 aa)). Residue arginine 376 is glycosylated ((Microbial infection) N-beta-linked (GlcNAc) arginine).

In terms of assembly, binding of TNF to the extracellular domain leads to homotrimerization. The aggregated death domains provide a novel molecular interface that interacts specifically with the death domain of TRADD. Various TRADD-interacting proteins such as TRAFS, RIPK1 and possibly FADD, are recruited to the complex by their association with TRADD. This complex activates at least two distinct signaling cascades, apoptosis and NF-kappa-B signaling. Interacts with BAG4, BABAM2, FEM1B, GRB2, SQSTM1 and TRPC4AP. Interacts directly with NOL3 (via CARD domain); inhibits TNF-signaling pathway. Interacts with SH3RF2, TRADD and RIPK1. SH3RF2 facilitates the recruitment of RIPK1 and TRADD to TNFRSF1A in a TNF-alpha-dependent process. Interacts with PGLYRP1; this interaction is important for cell death induction. Interacts (via death domain) with MADD (via death domain). As to quaternary structure, (Microbial infection) Interacts with mumps virus protein SH; this interaction inhibits downstream NF-kappa-B pathway activation. (Microbial infection) Interacts with HCV core protein. In terms of assembly, (Microbial infection) Interacts with human cytomegalovirus/HHV-5 protein UL138. As to quaternary structure, (Microbial infection) Interacts with host TNFRSF1A; this interaction leads to the stimulation of both surface expression and shedding of TNFRSF1A. In terms of processing, the soluble form is produced from the membrane form by proteolytic processing. (Microbial infection) Glycosylated at Arg-376 by enteropathogenic E.coli protein NleB1 and S.typhimurium protein Ssek3: arginine GlcNAcylation prevents homotypic/heterotypic death domain interactions.

The protein resides in the cell membrane. The protein localises to the golgi apparatus membrane. It localises to the secreted. Receptor for TNFSF2/TNF-alpha and homotrimeric TNFSF1/lymphotoxin-alpha. The adapter molecule FADD recruits caspase-8 to the activated receptor. The resulting death-inducing signaling complex (DISC) performs caspase-8 proteolytic activation which initiates the subsequent cascade of caspases (aspartate-specific cysteine proteases) mediating apoptosis. Contributes to the induction of non-cytocidal TNF effects including anti-viral state and activation of the acid sphingomyelinase. The chain is Tumor necrosis factor receptor superfamily member 1A (TNFRSF1A) from Homo sapiens (Human).